Reading from the N-terminus, the 864-residue chain is DNA mismatch repair protein MutS (864 aa).

607-614 (GPNMGGKS) serves as a coordination point for ATP.

It belongs to the DNA mismatch repair MutS family.

In terms of biological role, this protein is involved in the repair of mismatches in DNA. It is possible that it carries out the mismatch recognition step. This protein has a weak ATPase activity. This Neisseria gonorrhoeae (strain NCCP11945) protein is DNA mismatch repair protein MutS.